We begin with the raw amino-acid sequence, 101 residues long: Small ribosomal subunit protein uS14 (101 aa).

Residues 1–22 are disordered; the sequence is MAKVSSIKKNESRKKKSQSLHN. The span at 11–22 shows a compositional bias: basic residues; the sequence is ESRKKKSQSLHN.

It belongs to the universal ribosomal protein uS14 family. Part of the 30S ribosomal subunit. Contacts proteins S3 and S10.

Its function is as follows. Binds 16S rRNA, required for the assembly of 30S particles and may also be responsible for determining the conformation of the 16S rRNA at the A site. This chain is Small ribosomal subunit protein uS14, found in Rickettsia conorii (strain ATCC VR-613 / Malish 7).